We begin with the raw amino-acid sequence, 242 residues long: Adenosylcobinamide-GDP ribazoletransferase (242 aa).

Transmembrane regions (helical) follow at residues 31 to 51, 52 to 72, 109 to 129, 134 to 154, and 188 to 208; these read LLFY…LSTA, LMGA…VLLS, IAVV…VALI, GAAL…LFLT, and ILIG…CFIG.

The protein belongs to the CobS family. It depends on Mg(2+) as a cofactor.

It localises to the cell inner membrane. The enzyme catalyses alpha-ribazole + adenosylcob(III)inamide-GDP = adenosylcob(III)alamin + GMP + H(+). It catalyses the reaction alpha-ribazole 5'-phosphate + adenosylcob(III)inamide-GDP = adenosylcob(III)alamin 5'-phosphate + GMP + H(+). The protein operates within cofactor biosynthesis; adenosylcobalamin biosynthesis; adenosylcobalamin from cob(II)yrinate a,c-diamide: step 7/7. In terms of biological role, joins adenosylcobinamide-GDP and alpha-ribazole to generate adenosylcobalamin (Ado-cobalamin). Also synthesizes adenosylcobalamin 5'-phosphate from adenosylcobinamide-GDP and alpha-ribazole 5'-phosphate. In Pseudomonas fluorescens (strain SBW25), this protein is Adenosylcobinamide-GDP ribazoletransferase.